Here is a 260-residue protein sequence, read N- to C-terminus: MYQPQPFVTRLAFKCSDRPEAQEARERLAARYGDVGPENAQVIVALGGDGFMLESLHEAIASQTPIYGMNRGSVGFLMNEYSEDGLLERINAAERAVIHPLAMVAIDARRTQHRALAINEVSLLRQTRQTAKLRISIDGKVRMGELVCDGALLATPAGSTAYNLSAHGPIIPIDGRVLALTPISAFRPRRWRGALLPQSARVTFEILEADKRPVSAVADNFEVRDAMEVHISEDRGTSLAMLFDAGRSLEERVLAEQFSA.

Aspartate 49 acts as the Proton acceptor in catalysis. Residues 49 to 50 (DG), 119 to 120 (NE), aspartate 149, alanine 157, and 160 to 165 (TAYNLS) contribute to the NAD(+) site.

The protein belongs to the NAD kinase family. It depends on a divalent metal cation as a cofactor.

It localises to the cytoplasm. It carries out the reaction NAD(+) + ATP = ADP + NADP(+) + H(+). Its function is as follows. Involved in the regulation of the intracellular balance of NAD and NADP, and is a key enzyme in the biosynthesis of NADP. Catalyzes specifically the phosphorylation on 2'-hydroxyl of the adenosine moiety of NAD to yield NADP. The protein is NAD kinase of Caulobacter vibrioides (strain ATCC 19089 / CIP 103742 / CB 15) (Caulobacter crescentus).